A 119-amino-acid chain; its full sequence is Chorion class CA protein ERA.5 (119 aa).

Positions 1-21 are cleaved as a signal peptide; the sequence is MSTYTFVLFCLQICLIQNVYS. The segment at 22–55 is left arm; the sequence is QCLGRVGPGGPPVGPYGGPLGGPGYGPVGYGGCG. Residues 56–103 are central domain; it reads GYGGSGIGNVAVAGELPVAGSSAVMGQVPVIGAVEFAGPACAVGSVSI. Residues 104-119 are right arm; that stretch reads SGACGPTCGCGGSPYY.

It belongs to the chorion protein family.

Functionally, this protein is one of many from the eggshell of the silk moth. The polypeptide is Chorion class CA protein ERA.5 (ERA.5) (Bombyx mori (Silk moth)).